A 451-amino-acid chain; its full sequence is Tetraspanin-14 (451 aa).

At 1 to 56 the chain is on the cytoplasmic side; the sequence is MPHRAPRRFMKTAPGACDWEQCLLMGSGEPTRARAVVSSSHKQRKPRQEISACLKW. Residues 20–24 carry the Basolateral membrane targeting motif; that stretch reads EQCLL. A helical membrane pass occupies residues 57 to 77; that stretch reads LVFLLNSIVFLVGVGILALGV. Residues 78–96 lie on the Extracellular side of the membrane; the sequence is YLFIKDFREVKLVDIILNP. A helical membrane pass occupies residues 97 to 117; sequence AILISIFGFSICVVSFFGFMG. The Cytoplasmic segment spans residues 118–130; sequence ALRDNIFLLKCFA. The chain crosses the membrane as a helical span at residues 131–151; sequence ACVFLSYILVVAVTLVFFTLF. Residues 152–285 are Extracellular-facing; that stretch reads YTDTTEGLSA…QPLRTLFESH (134 aa). N-linked (GlcNAc...) asparagine glycosylation is found at Asn205 and Asn211. A helical membrane pass occupies residues 286–306; that stretch reads AVHVGAFVALLIVPVCISVCL. Residues 307–451 are Cytoplasmic-facing; the sequence is TNILAKQVDH…TDLVPQKSKS (145 aa). A disordered region spans residues 328–451; it reads NDRRRKRDHN…TDLVPQKSKS (124 aa). The span at 366–376 shows a compositional bias: pro residues; sequence PDIPPPLPPIE. Low complexity predominate over residues 410–434; the sequence is ATTTRTPPAAAGPAPTPQATTTNRT. Positions 435–444 are enriched in polar residues; sequence HQWVLQQTDL.

Belongs to the tetraspanin (TM4SF) family. Expressed in the germline, particularly in sperm cells. In terms of tissue distribution, expressed in the germline (particularly in sperm cells), anterior sensory cilia, hypodermis and vulva (at protein level). As to expression, expressed in the pharynx, hypodermis and vulva (at protein level).

It localises to the cell membrane. The protein resides in the cytoplasmic vesicle membrane. Its subcellular location is the endosome membrane. The protein localises to the early endosome membrane. It is found in the late endosome membrane. It localises to the recycling endosome membrane. The protein resides in the apical cell membrane. Its subcellular location is the basolateral cell membrane. Functionally, functions redundantly with tsp-12 to regulate cell surface levels of the BMP type II receptor daf-4 (but not BMP type I receptor sma-6), probably by regulating endosomal sorting and recycling of receptors, preventing their targeting to degradative lysosomes. Together with tsp-12, regulates cell fate specification in the postembryonic mesodermal M lineage, body size, male development and vulva development, probably by positively modulating BMP-like Sma/Mab signaling. Together with tsp-12 involved in maintaining the structural and functional integrity of the endosomal network. Together with tsp-12, probably acts by modulating the activation of glp-1, Notch-like receptor, to regulate germline maturation. Functions redundantly with tsp-12 to regulate cell fate specification in the postembryonic mesodermal M lineage, body size, embryonic and vulva development. In terms of biological role, functions redundantly with tsp-12 to regulate cell fate specification in the postembryonic mesodermal M lineage. Likely plays a complementary role in mesodermal development with tsp-14 isoform a, but may be more critical. This Caenorhabditis elegans protein is Tetraspanin-14.